Consider the following 367-residue polypeptide: Glutamate 5-kinase (367 aa).

Lys-10 contributes to the ATP binding site. 3 residues coordinate substrate: Ser-50, Asp-137, and Asn-149. Residues 169 to 170 (TD) and 211 to 217 (TGGMSTK) contribute to the ATP site. Positions 275–353 (AGEITVDEGA…QEIDAILGYE (79 aa)) constitute a PUA domain.

It belongs to the glutamate 5-kinase family.

The protein resides in the cytoplasm. The enzyme catalyses L-glutamate + ATP = L-glutamyl 5-phosphate + ADP. Its pathway is amino-acid biosynthesis; L-proline biosynthesis; L-glutamate 5-semialdehyde from L-glutamate: step 1/2. Catalyzes the transfer of a phosphate group to glutamate to form L-glutamate 5-phosphate. This is Glutamate 5-kinase from Escherichia fergusonii (strain ATCC 35469 / DSM 13698 / CCUG 18766 / IAM 14443 / JCM 21226 / LMG 7866 / NBRC 102419 / NCTC 12128 / CDC 0568-73).